We begin with the raw amino-acid sequence, 193 residues long: General stress protein 16U (193 aa).

Belongs to the CAPAB/TerDEXZ family.

The sequence is that of General stress protein 16U (yceD) from Bacillus subtilis (strain 168).